The chain runs to 430 residues: Asparagine--tRNA ligase (430 aa).

The protein belongs to the class-II aminoacyl-tRNA synthetase family. As to quaternary structure, homodimer.

It is found in the cytoplasm. It catalyses the reaction tRNA(Asn) + L-asparagine + ATP = L-asparaginyl-tRNA(Asn) + AMP + diphosphate + H(+). The chain is Asparagine--tRNA ligase from Staphylococcus haemolyticus (strain JCSC1435).